The sequence spans 117 residues: Cuticle protein CP1243 (117 aa).

Tandem repeats lie at residues 1 to 17 (NYGE…LVQF), 26 to 43 (AEIG…HVQF), 67 to 84 (QPYG…NRQF), and 93 to 110 (VLVG…NVQF).

In terms of tissue distribution, calcified shell.

In Cancer pagurus (Rock crab), this protein is Cuticle protein CP1243.